The sequence spans 251 residues: uncharacterized protein (251 aa).

Residues 192–238 form an RING-type zinc finger; it reads CMMCVQRGDERVAITTPYTTDCGHTYCYACIMSRLKLVNNVSCPICK.

The protein localises to the cytoplasm. This is an uncharacterized protein from Schizosaccharomyces pombe (strain 972 / ATCC 24843) (Fission yeast).